The chain runs to 245 residues: Transmembrane and ubiquitin-like domain-containing protein 1 (245 aa).

Residues 2–30 are required to release iHOPS from membranes; sequence ALIEGVGDEVTVLFSVLACLLVLALAWVS. Residues 11–31 traverse the membrane as a helical segment; the sequence is VTVLFSVLACLLVLALAWVST. Positions 34-51 are enriched in polar residues; it reads TESTDPLPQSSGTTTPAQ. The segment at 34 to 100 is disordered; sequence TESTDPLPQS…ASTPPDSPQE (67 aa). A phosphoserine mark is found at S73, S97, and S126. The region spanning 102–175 is the Ubiquitin-like domain; it reads LLLRLKFLND…LHCHVSTRVG (74 aa). Transmembrane regions (helical) follow at residues 194 to 214 and 219 to 239; these read IGSL…YCQI and FFPL…SLLA.

In terms of assembly, interacts with EEF1A1, GRIA2, GRIP1. Interacts with CAMLG, TUBG1. Interacts with NPM1 and CDKN2A; TMUB1 can enhance interaction between NPM1 and CDKN2A and is proposed to bridge the proteins; proposed to be mediated by iHOPS. Interacts with ERLIN2 and AMFR; TMUB1 promotes the interaction of ERLIN2 with AMFR. In terms of processing, processed by regulated intramembrane proteolysis (RIP) in the N-terminus to release iHOPS from membranes.

It localises to the membrane. The protein localises to the postsynaptic cell membrane. Its subcellular location is the recycling endosome. It is found in the cytoplasm. The protein resides in the cytoskeleton. It localises to the microtubule organizing center. The protein localises to the centrosome. Its subcellular location is the nucleus. It is found in the nucleolus. Involved in sterol-regulated ubiquitination and degradation of HMG-CoA reductase HMGCR. Involved in positive regulation of AMPA-selective glutamate receptor GRIA2 recycling to the cell surface. Acts as a negative regulator of hepatocyte growth during regeneration. Functionally, may contribute to the regulation of translation during cell-cycle progression. May contribute to the regulation of cell proliferation. May be involved in centrosome assembly. Modulates stabilization and nucleolar localization of tumor suppressor CDKN2A and enhances association between CDKN2A and NPM1. This Rattus norvegicus (Rat) protein is Transmembrane and ubiquitin-like domain-containing protein 1 (Tmub1).